A 501-amino-acid polypeptide reads, in one-letter code: MAEAAARILEALPAVCEYRWSCKDASKRFTVVNPATGEPITVVQAGNLDTVQGAIQASHRAFESWRWKTRQERSLYLLQAADELQKHSHELAVLLCLENGKPVKDASFDVGFLVQVFRYFGSIVDKLPSEFFDQGSIYSSVIYEPHGVCVGILPFNWPPVHAGGKLAPCLAAGNTMVLKPGEQAPLTLMRIVEILQSVFPADVVQAVPGLGPEIPQALINHPLVKMVSLTGSTASGSQAAQTAAVTLTPTVLELGGKNAFVVFEDADLELVVRDAIDGAFFNKGESCTAASRILVHKDLYPTLVSRLTAAVKKLRTGDGLDETTHIGPVVSRERQQEVLSYIEQGKREGATLAAQGDPPTAGRLSGGFFVPPTLFTDVTADMTIAQREIFGPVVTVGSFETEEEAVKTVNSSQYGLFAGVYSSDFTRAMRVTRKLDVGVVLVNNYFRALLGTPFGGVKDSGYGREHWIGTLREWSRVKNVRFPSGLSPIPAWGGAVDVCKL.

Residue G231–G236 participates in NAD(+) binding. Catalysis depends on residues E253 and C287.

This sequence belongs to the aldehyde dehydrogenase family.

It carries out the reaction an aldehyde + NAD(+) + H2O = a carboxylate + NADH + 2 H(+). It functions in the pathway mycotoxin biosynthesis. In terms of biological role, aldehyde dehydrogenase; part of the gene cluster that mediates the biosynthesis of the mycotoxin citrinin, a hepato-nephrotoxic compound to humans due to inhibition of respiration complex III. The pathway begins with the synthesis of a keto-aldehyde intermediate by the citrinin PKS (pksCT) from successive condensations of 4 malonyl-CoA units, presumably with a simple acetyl-CoA starter unit. Release of the keto-aldehyde intermediate is consistent with the presence of the C-terminal reductive release domain. Mp11 collaborates with pksCT by catalyzing the hydrolysis of ACP-bound acyl intermediates to free the ACP from stalled intermediates. Mpl2 then catalyzes the oxidation of the C-12 methyl of the ketone intermediate to an alcohol intermediate which is further oxidized by the oxidoreductase mpl7 to produce a bisaldehyde intermediate. The fourth catalytic step is catalyzed by the mpl4 aldehyde dehydrogenase. The final transformation is the reduction of C-3 by mpl6 to provide the chemically stable citrinin nucleus. This Monascus purpureus (Red mold) protein is Aldehyde dehydrogenase mpl4.